We begin with the raw amino-acid sequence, 766 residues long: Dipeptidyl peptidase 4 (766 aa).

Topologically, residues 1 to 6 (MKTPWK) are cytoplasmic. The chain crosses the membrane as a helical; Signal-anchor for type II membrane protein span at residues 7 to 27 (VLLGLLGIAALVTVITVPVVL). Residues 28 to 766 (LNKGTDDAAA…HFLKQCFSLP (739 aa)) are Extracellular-facing. N-linked (GlcNAc...) asparagine glycosylation is found at Asn85, Asn92, Asn150, Asn179, Asn219, Asn229, Asn279, and Asn321. Cystine bridges form between Cys385-Cys394, Cys444-Cys447, and Cys454-Cys472. The active-site Charge relay system is the Ser630. Residues Cys649 and Cys762 are joined by a disulfide bond. Asn685 carries an N-linked (GlcNAc...) asparagine glycan. Active-site charge relay system residues include Asp708 and His740.

Belongs to the peptidase S9B family. DPPIV subfamily. As to quaternary structure, monomer. Homodimer. Heterodimer with Seprase (FAP). Requires homodimerization for optimal dipeptidyl peptidase activity and T-cell costimulation. Found in a membrane raft complex, at least composed of BCL10, CARD11, DPP4 and IKBKB. Associates with collagen. Interacts with PTPRC; the interaction is enhanced in an interleukin-12-dependent manner in activated lymphocytes. Interacts (via extracellular domain) with ADA; does not inhibit its dipeptidyl peptidase activity. Interacts with CAV1 (via the N-terminus); the interaction is direct. Interacts (via cytoplasmic tail) with CARD11 (via PDZ domain); its homodimerization is necessary for interaction with CARD11. Interacts with IGF2R; the interaction is direct. Interacts with GPC3. The soluble form (Dipeptidyl peptidase 4 soluble form also named SDPP) derives from the membrane form (Dipeptidyl peptidase 4 membrane form also named MDPP) by proteolytic processing. In terms of processing, N- and O-Glycosylated. Post-translationally, phosphorylated. Mannose 6-phosphate residues in the carbohydrate moiety are necessary for interaction with IGF2R in activated T-cells. Mannose 6-phosphorylation is induced during T-cell activation.

The protein resides in the secreted. It localises to the cell membrane. The protein localises to the apical cell membrane. Its subcellular location is the cell projection. It is found in the invadopodium membrane. The protein resides in the lamellipodium membrane. It localises to the cell junction. The protein localises to the membrane raft. The enzyme catalyses Release of an N-terminal dipeptide, Xaa-Yaa-|-Zaa-, from a polypeptide, preferentially when Yaa is Pro, provided Zaa is neither Pro nor hydroxyproline.. With respect to regulation, inhibited by GPC3 and diprotin A. Its function is as follows. Cell surface glycoprotein receptor involved in the costimulatory signal essential for T-cell receptor (TCR)-mediated T-cell activation. Acts as a positive regulator of T-cell coactivation, by binding at least ADA, CAV1, IGF2R, and PTPRC. Its binding to CAV1 and CARD11 induces T-cell proliferation and NF-kappa-B activation in a T-cell receptor/CD3-dependent manner. Its interaction with ADA also regulates lymphocyte-epithelial cell adhesion. In association with FAP is involved in the pericellular proteolysis of the extracellular matrix (ECM), the migration and invasion of endothelial cells into the ECM. May be involved in the promotion of lymphatic endothelial cells adhesion, migration and tube formation. When overexpressed, enhanced cell proliferation, a process inhibited by GPC3. Also acts as a serine exopeptidase with a dipeptidyl peptidase activity that regulates various physiological processes by cleaving peptides in the circulation, including many chemokines, mitogenic growth factors, neuropeptides and peptide hormones such as brain natriuretic peptide 32. Removes N-terminal dipeptides sequentially from polypeptides having unsubstituted N-termini provided that the penultimate residue is proline. The polypeptide is Dipeptidyl peptidase 4 (DPP4) (Sus scrofa (Pig)).